The primary structure comprises 549 residues: Indole-3-acetic acid-amido synthetase GH3.2 (549 aa).

The protein belongs to the IAA-amido conjugating enzyme family. Expressed in flowers, pollen, cotyledons, stipules, true leaves, hypocotyls, and all parts of the roots except for the primary root tips.

Functionally, catalyzes the synthesis of indole-3-acetic acid (IAA)-amino acid conjugates, providing a mechanism for the plant to cope with the presence of excess auxin. Strongly reactive with Glu, Gln, Trp, Asp, Ala, Leu, Phe, Gly, Tyr, Met, Ile and Val. Little or no product formation with His, Ser, Thr, Arg, Lys, or Cys. Also active on pyruvic and butyric acid analogs of IAA, PAA and the synthetic auxin naphthaleneacetic acid (NAA). The two chlorinated synthetic auxin herbicides 2,4-D and 3,6-dichloro-o-anisic acid (dicamba) cannot be used as substrates. The protein is Indole-3-acetic acid-amido synthetase GH3.2 (GH3.2) of Arabidopsis thaliana (Mouse-ear cress).